Reading from the N-terminus, the 233-residue chain is Large ribosomal subunit protein uL3 (233 aa).

The protein belongs to the universal ribosomal protein uL3 family. In terms of assembly, part of the 50S ribosomal subunit. Forms a cluster with proteins L14 and L19.

One of the primary rRNA binding proteins, it binds directly near the 3'-end of the 23S rRNA, where it nucleates assembly of the 50S subunit. The chain is Large ribosomal subunit protein uL3 from Ureaplasma parvum serovar 3 (strain ATCC 27815 / 27 / NCTC 11736).